The chain runs to 600 residues: Elongation factor 4 (600 aa).

The 183-residue stretch at 5 to 187 folds into the tr-type G domain; sequence KYIRNFSIVA…EIVEKVPAPE (183 aa). GTP is bound by residues 17-22 and 134-137; these read DHGKST and NKVD.

It belongs to the TRAFAC class translation factor GTPase superfamily. Classic translation factor GTPase family. LepA subfamily.

Its subcellular location is the cell membrane. It carries out the reaction GTP + H2O = GDP + phosphate + H(+). Functionally, required for accurate and efficient protein synthesis under certain stress conditions. May act as a fidelity factor of the translation reaction, by catalyzing a one-codon backward translocation of tRNAs on improperly translocated ribosomes. Back-translocation proceeds from a post-translocation (POST) complex to a pre-translocation (PRE) complex, thus giving elongation factor G a second chance to translocate the tRNAs correctly. Binds to ribosomes in a GTP-dependent manner. In Clostridium perfringens (strain ATCC 13124 / DSM 756 / JCM 1290 / NCIMB 6125 / NCTC 8237 / Type A), this protein is Elongation factor 4.